The following is a 147-amino-acid chain: SPI-1 type 3 secretion system pilotin (147 aa).

The first 15 residues, 1–15 (MKKFYSCLPVFLLIG), serve as a signal peptide directing secretion. Cysteine 16 is lipidated: N-palmitoyl cysteine. A lipid anchor (S-diacylglycerol cysteine) is attached at cysteine 16.

It belongs to the InvH family.

Its subcellular location is the cell outer membrane. In terms of biological role, involved in the synthesis of the type III secretion system (T3SS), also called injectisome, which is used to inject bacterial effector proteins into eukaryotic host cells. Pilot protein that is required for the proper localization of the secretin InvG/SctC in the outer membrane. Necessary for efficient adherence and entry of these organisms into cultured epithelial cells. The polypeptide is SPI-1 type 3 secretion system pilotin (Salmonella typhimurium (strain SL1344)).